The sequence spans 315 residues: Ribosomal RNA small subunit methyltransferase H (315 aa).

Residues 35–37, Asp-55, Phe-80, Asp-102, and Gln-109 each bind S-adenosyl-L-methionine; that span reads GGH.

Belongs to the methyltransferase superfamily. RsmH family.

It localises to the cytoplasm. It carries out the reaction cytidine(1402) in 16S rRNA + S-adenosyl-L-methionine = N(4)-methylcytidine(1402) in 16S rRNA + S-adenosyl-L-homocysteine + H(+). Its function is as follows. Specifically methylates the N4 position of cytidine in position 1402 (C1402) of 16S rRNA. The protein is Ribosomal RNA small subunit methyltransferase H of Shewanella pealeana (strain ATCC 700345 / ANG-SQ1).